Consider the following 187-residue polypeptide: MGVTLDSALNPHKPEGFGEVVAPDPDYFKALQAEVNDKGFLVTSAEELFQWARTGSLWWMTFGLACCAVEMIHVNMPRYDLERFGAAPRASPRQSDVMIVAGTLCNKMAPALRRVYDQMSEPKYVISMGSCANGGGYYHYSYSVVRGCDRIVPVDIYVPGCPPTAEALLYGIMQLQRKIRRIGTLER.

Residues Cys-66, Cys-67, Cys-131, and Cys-161 each coordinate [4Fe-4S] cluster.

The protein belongs to the complex I 20 kDa subunit family. As to quaternary structure, NDH-1 is composed of 14 different subunits. Subunits NuoB, C, D, E, F, and G constitute the peripheral sector of the complex. The cofactor is [4Fe-4S] cluster.

It localises to the cell inner membrane. The enzyme catalyses a quinone + NADH + 5 H(+)(in) = a quinol + NAD(+) + 4 H(+)(out). NDH-1 shuttles electrons from NADH, via FMN and iron-sulfur (Fe-S) centers, to quinones in the respiratory chain. Couples the redox reaction to proton translocation (for every two electrons transferred, four hydrogen ions are translocated across the cytoplasmic membrane), and thus conserves the redox energy in a proton gradient. The polypeptide is NADH-quinone oxidoreductase subunit B (Rhizorhabdus wittichii (strain DSM 6014 / CCUG 31198 / JCM 15750 / NBRC 105917 / EY 4224 / RW1) (Sphingomonas wittichii)).